The chain runs to 597 residues: Histidine protein kinase DivJ (597 aa).

Transmembrane regions (helical) follow at residues 40-57, 62-81, 91-109, 110-125, 137-158, and 159-188; these read LGWLAAVCLAAAAALFTA, WPVWAALGAGALPALVSLIF, WLLVLWAVGGSLAAVLTGG, VGGAMAAWCLAPVAAA, GAALALIGACVAALTQLSGLAP, and AAPTGPLAFVLGFLALVTTGLGLAAGLLIG. The Histidine kinase domain maps to 335-553; the sequence is NMSHELRTPL…TVSVRLPVLL (219 aa). His338 carries the phosphohistidine; by autocatalysis modification. Over residues 561–585 the composition is skewed to pro residues; it reads PTPPAAPEAPSAPEPAPTVEEPPPA. The tract at residues 561-597 is disordered; the sequence is PTPPAAPEAPSAPEPAPTVEEPPPASLGDNVIAFAPR.

The protein resides in the cell membrane. It catalyses the reaction ATP + protein L-histidine = ADP + protein N-phospho-L-histidine.. Kinase required for the regulation of cell division and differentiation. Is part of a signal transduction pathway, activating PleD by phosphorylation. The polypeptide is Histidine protein kinase DivJ (divJ) (Caulobacter vibrioides (strain ATCC 19089 / CIP 103742 / CB 15) (Caulobacter crescentus)).